The sequence spans 356 residues: UDP-N-acetylglucosamine--N-acetylmuramyl-(pentapeptide) pyrophosphoryl-undecaprenol N-acetylglucosamine transferase (356 aa).

3 residues coordinate UDP-N-acetyl-alpha-D-glucosamine: R166, S196, and Q290.

Belongs to the glycosyltransferase 28 family. MurG subfamily.

It localises to the cell membrane. The catalysed reaction is Mur2Ac(oyl-L-Ala-gamma-D-Glu-L-Lys-D-Ala-D-Ala)-di-trans,octa-cis-undecaprenyl diphosphate + UDP-N-acetyl-alpha-D-glucosamine = beta-D-GlcNAc-(1-&gt;4)-Mur2Ac(oyl-L-Ala-gamma-D-Glu-L-Lys-D-Ala-D-Ala)-di-trans,octa-cis-undecaprenyl diphosphate + UDP + H(+). It participates in cell wall biogenesis; peptidoglycan biosynthesis. Cell wall formation. Catalyzes the transfer of a GlcNAc subunit on undecaprenyl-pyrophosphoryl-MurNAc-pentapeptide (lipid intermediate I) to form undecaprenyl-pyrophosphoryl-MurNAc-(pentapeptide)GlcNAc (lipid intermediate II). In Staphylococcus aureus (strain Mu3 / ATCC 700698), this protein is UDP-N-acetylglucosamine--N-acetylmuramyl-(pentapeptide) pyrophosphoryl-undecaprenol N-acetylglucosamine transferase.